The primary structure comprises 250 residues: Triosephosphate isomerase (250 aa).

9–11 lines the substrate pocket; the sequence is NWK. Residue H95 is the Electrophile of the active site. Catalysis depends on E167, which acts as the Proton acceptor. Substrate-binding positions include G173, S213, and 234 to 235; that span reads GG.

The protein belongs to the triosephosphate isomerase family. In terms of assembly, homodimer.

It localises to the cytoplasm. It catalyses the reaction D-glyceraldehyde 3-phosphate = dihydroxyacetone phosphate. Its pathway is carbohydrate biosynthesis; gluconeogenesis. It participates in carbohydrate degradation; glycolysis; D-glyceraldehyde 3-phosphate from glycerone phosphate: step 1/1. Its function is as follows. Involved in the gluconeogenesis. Catalyzes stereospecifically the conversion of dihydroxyacetone phosphate (DHAP) to D-glyceraldehyde-3-phosphate (G3P). This chain is Triosephosphate isomerase, found in Exiguobacterium sibiricum (strain DSM 17290 / CCUG 55495 / CIP 109462 / JCM 13490 / 255-15).